The sequence spans 459 residues: Argininosuccinate lyase (459 aa).

It belongs to the lyase 1 family. Argininosuccinate lyase subfamily.

The protein localises to the cytoplasm. It carries out the reaction 2-(N(omega)-L-arginino)succinate = fumarate + L-arginine. It functions in the pathway amino-acid biosynthesis; L-arginine biosynthesis; L-arginine from L-ornithine and carbamoyl phosphate: step 3/3. The polypeptide is Argininosuccinate lyase (Prochlorococcus marinus subsp. pastoris (strain CCMP1986 / NIES-2087 / MED4)).